A 351-amino-acid polypeptide reads, in one-letter code: 3-hydroxy-4-methyl-anthranilyl-[aryl-carrier protein] 5-monooxygenase (351 aa).

It belongs to the aromatic-ring hydroxylase family. It depends on FAD as a cofactor.

It carries out the reaction 3-hydroxy-4-methylanthranilyl-[aryl-carrier protein] + NADH + O2 + H(+) = 3,5-dihydroxy-4-methylanthranilyl-[aryl-carrier protein] + NAD(+) + H2O. Its pathway is antibiotic biosynthesis. Functionally, involved in the biosynthesis of the antitumor antibiotic sibiromycin. Hydroxylates the C5 position of the peptidyl carrier protein (PCP)-bound 4-methyl-3-hydroxyanthranilic acid (4-MHA or 3H4MAA), leading to the formation of the fully substituted anthranilate moiety found in sibiromycin. The polypeptide is 3-hydroxy-4-methyl-anthranilyl-[aryl-carrier protein] 5-monooxygenase (Streptosporangium sibiricum).